Here is an 879-residue protein sequence, read N- to C-terminus: Phosphoenolpyruvate carboxylase (879 aa).

Catalysis depends on residues H138 and K545.

The protein belongs to the PEPCase type 1 family. Mg(2+) serves as cofactor.

The enzyme catalyses oxaloacetate + phosphate = phosphoenolpyruvate + hydrogencarbonate. Forms oxaloacetate, a four-carbon dicarboxylic acid source for the tricarboxylic acid cycle. The polypeptide is Phosphoenolpyruvate carboxylase (ppc) (Haemophilus influenzae (strain ATCC 51907 / DSM 11121 / KW20 / Rd)).